A 116-amino-acid chain; its full sequence is Protein Rev (116 aa).

A Phosphoserine; by host CK2 modification is found at serine 8. A homomultimerization region spans residues 18–26 (IIKILYQSN). Disordered stretches follow at residues 25–49 (SNPYPKPEGTRQARRNRRRRWRARQ) and 82–116 (SLNCDEDSGQGTEGELGSPQIPVEPDTVLGSGDKE). The Nuclear localization signal and RNA-binding (RRE) motif lies at 34–50 (TRQARRNRRRRWRARQR). Basic residues predominate over residues 36–49 (QARRNRRRRWRARQ). The short motif at 73-84 (LQLPPLERLSLN) is the Nuclear export signal and binding to XPO1 element. At serine 99 the chain carries Phosphoserine; by host.

This sequence belongs to the HIV-1 REV protein family. Homomultimer; when bound to the RRE. Multimeric assembly is essential for activity and may involve XPO1. Binds to human KPNB1, XPO1, TNPO1, RANBP5 and IPO7. Interacts with the viral Integrase. Interacts with human KHDRBS1. Interacts with human NAP1; this interaction decreases Rev multimerization and stimulates its activity. Interacts with human DEAD-box helicases DDX3 and DDX24; these interactions may serve for viral RNA export to the cytoplasm and packaging, respectively. Interacts with human PSIP1; this interaction may inhibit HIV-1 DNA integration by promoting dissociation of the Integrase-LEDGF/p75 complex. In terms of processing, asymmetrically arginine dimethylated at one site by host PRMT6. Methylation impairs the RNA-binding activity and export of viral RNA from the nucleus to the cytoplasm. Post-translationally, phosphorylated by protein kinase CK2. Presence of, and maybe binding to the N-terminus of the regulatory beta subunit of CK2 is necessary for CK2-mediated Rev's phosphorylation.

Its subcellular location is the host nucleus. It is found in the host nucleolus. The protein resides in the host cytoplasm. Functionally, escorts unspliced or incompletely spliced viral pre-mRNAs (late transcripts) out of the nucleus of infected cells. These pre-mRNAs carry a recognition sequence called Rev responsive element (RRE) located in the env gene, that is not present in fully spliced viral mRNAs (early transcripts). This function is essential since most viral proteins are translated from unspliced or partially spliced pre-mRNAs which cannot exit the nucleus by the pathway used by fully processed cellular mRNAs. Rev itself is translated from a fully spliced mRNA that readily exits the nucleus. Rev's nuclear localization signal (NLS) binds directly to KPNB1/Importin beta-1 without previous binding to KPNA1/Importin alpha-1. KPNB1 binds to the GDP bound form of RAN (Ran-GDP) and targets Rev to the nucleus. In the nucleus, the conversion from Ran-GDP to Ran-GTP dissociates Rev from KPNB1 and allows Rev's binding to the RRE in viral pre-mRNAs. Rev multimerization on the RRE via cooperative assembly exposes its nuclear export signal (NES) to the surface. Rev can then form a complex with XPO1/CRM1 and Ran-GTP, leading to nuclear export of the complex. Conversion from Ran-GTP to Ran-GDP mediates dissociation of the Rev/RRE/XPO1/RAN complex, so that Rev can return to the nucleus for a subsequent round of export. Beside KPNB1, also seems to interact with TNPO1/Transportin-1, RANBP5/IPO5 and IPO7/RANBP7 for nuclear import. The nucleoporin-like HRB/RIP is an essential cofactor that probably indirectly interacts with Rev to release HIV RNAs from the perinuclear region to the cytoplasm. The polypeptide is Protein Rev (Human immunodeficiency virus type 1 group M subtype K (isolate 97ZR-EQTB11) (HIV-1)).